We begin with the raw amino-acid sequence, 408 residues long: Phosphoenolpyruvate/phosphate translocator 1, chloroplastic (408 aa).

The transit peptide at methionine 1–proline 66 directs the protein to the chloroplast. Helical transmembrane passes span threonine 105–tyrosine 125, isoleucine 139–isoleucine 159, isoleucine 165–leucine 185, proline 222–leucine 242, alanine 245–phenylalanine 262, isoleucine 283–leucine 303, and threonine 375–tyrosine 395. The region spanning isoleucine 124–serine 241 is the EamA domain.

This sequence belongs to the TPT transporter family. PPT (TC 2.A.7.9) subfamily.

It is found in the plastid. The protein localises to the chloroplast membrane. Functionally, phosphoenolpyruvate/phosphate translocator that transports phosphoenolpyruvate (PEP) and dihydroxyacetone phosphate. The chain is Phosphoenolpyruvate/phosphate translocator 1, chloroplastic (PPT1) from Oryza sativa subsp. japonica (Rice).